The chain runs to 267 residues: Glutamate racemase (267 aa).

Substrate contacts are provided by residues 9–10 and 41–42; these read DS and YS. Cysteine 73 (proton donor/acceptor) is an active-site residue. 74–75 contacts substrate; it reads NT. Cysteine 184 (proton donor/acceptor) is an active-site residue. Residue 185-186 participates in substrate binding; that stretch reads TH.

The protein belongs to the aspartate/glutamate racemases family.

It carries out the reaction L-glutamate = D-glutamate. Its pathway is cell wall biogenesis; peptidoglycan biosynthesis. In terms of biological role, provides the (R)-glutamate required for cell wall biosynthesis. The polypeptide is Glutamate racemase (Actinobacillus pleuropneumoniae serotype 7 (strain AP76)).